Here is a 267-residue protein sequence, read N- to C-terminus: DNA damage-regulated autophagy modulator protein 2 (267 aa).

6 helical membrane passes run 8 to 28 (LSFL…FSYI), 53 to 73 (RCLF…TMYV), 87 to 107 (LIIK…LGLS), 118 to 138 (FIVH…YMFV), 160 to 180 (LLLV…SSIL), and 203 to 223 (VLHL…FGFF).

It belongs to the DRAM/TMEM150 family. As to expression, expressed in the retina.

It localises to the lysosome membrane. The protein localises to the photoreceptor inner segment. Its subcellular location is the apical cell membrane. Plays a role in the initiation of autophagy. In the retina, might be involved in the process of photoreceptor cells renewal and recycling to preserve visual function. Induces apoptotic cell death when coexpressed with DRAM1. The chain is DNA damage-regulated autophagy modulator protein 2 (Dram2) from Mus musculus (Mouse).